Consider the following 360-residue polypeptide: Protein Wnt-2 (360 aa).

The first 25 residues, Met1–Ser25, serve as a signal peptide directing secretion. Intrachain disulfides connect Cys76/Cys87, Cys127/Cys135, Cys137/Cys157, Cys206/Cys220, Cys208/Cys215, Cys278/Cys309, Cys294/Cys304, Cys308/Cys348, Cys324/Cys339, Cys326/Cys336, and Cys331/Cys332. Ser212 carries the O-palmitoleoyl serine; by PORCN lipid modification. A glycan (N-linked (GlcNAc...) asparagine) is linked at Asn295.

This sequence belongs to the Wnt family. In terms of processing, palmitoleoylation is required for efficient binding to frizzled receptors. Depalmitoleoylation leads to Wnt signaling pathway inhibition.

It localises to the secreted. Its subcellular location is the extracellular space. The protein resides in the extracellular matrix. In terms of biological role, ligand for members of the frizzled family of seven transmembrane receptors. Functions in the canonical Wnt signaling pathway that results in activation of transcription factors of the TCF/LEF family. Functions as a upstream regulator of FGF10 expression. Plays an important role in embryonic lung development. May contribute to embryonic brain development by regulating the proliferation of dopaminergic precursors and neurons. The protein is Protein Wnt-2 (WNT2) of Nomascus leucogenys (Northern white-cheeked gibbon).